The chain runs to 131 residues: MSWQAYVDEHLMCEIEGHHLASAAILGHDGTVWAQSADFPQFKPEEITGIMKDFDEPGHLAPTGMFVAAAKYMVIQGEPGAVIRGKKGAGGITIKKTGQALVVGIYDEPMTPGQCNMVVERLGDYLLKQGL.

Cys-13 and Cys-115 are disulfide-bonded. Residues 81 to 97 carry the Involved in PIP2 interaction motif; it reads AVIRGKKGAGGITIKKT. Thr-111 carries the phosphothreonine modification.

This sequence belongs to the profilin family. In terms of assembly, occurs in many kinds of cells as a complex with monomeric actin in a 1:1 ratio. Phosphorylated by MAP kinases.

It localises to the cytoplasm. It is found in the cytoskeleton. Its function is as follows. Binds to actin and affects the structure of the cytoskeleton. At high concentrations, profilin prevents the polymerization of actin, whereas it enhances it at low concentrations. In Phleum pratense (Common timothy), this protein is Profilin-8.